The following is a 486-amino-acid chain: Protein DETOXIFICATION 16 (486 aa).

Helical transmembrane passes span 35-55 (GPLI…VMFV), 68-88 (IATS…ASAL), 117-137 (LASI…VFFG), 142-162 (IATL…AYGL), 179-199 (VVFC…VLVF), 207-227 (GAAL…FCYV), 259-279 (ALMV…SGLL), 288-308 (VLSI…GLSG), 331-351 (RVVI…LILI), 365-385 (VVSY…LDSL), 401-421 (IGAI…GLLL), and 433-453 (WLGI…VTIF).

This sequence belongs to the multi antimicrobial extrusion (MATE) (TC 2.A.66.1) family.

It is found in the membrane. This chain is Protein DETOXIFICATION 16, found in Arabidopsis thaliana (Mouse-ear cress).